The chain runs to 625 residues: Autophagy-related protein 20 (625 aa).

The interval 1 to 59 is disordered; sequence MNPNDNNLFGDIEQDNNPSFYGNQSFLRDPYGKSKQTCPPSVTSNGDPSITNDDNNSAH. Polar residues-rich tracts occupy residues 15–26 and 34–59; these read DNNPSFYGNQSF and SKQTCPPSVTSNGDPSITNDDNNSAH. One can recognise a PX domain in the interval 79-202; sequence NDPNLQINVI…HKFLDPNYEL (124 aa). 4 residues coordinate a 1,2-diacyl-sn-glycero-3-phospho-(1D-myo-inositol-3-phosphate): arginine 118, serine 120, lysine 144, and arginine 167.

The protein belongs to the sorting nexin family.

The protein resides in the endosome membrane. Its subcellular location is the preautophagosomal structure membrane. Its function is as follows. Required for cytoplasm to vacuole transport (Cvt), pexophagy and mitophagy. Also involved in endoplasmic reticulum-specific autophagic process and is essential for the survival of cells subjected to severe ER stress. Functions in protein retrieval from the endocytic pathway. The polypeptide is Autophagy-related protein 20 (ATG20) (Debaryomyces hansenii (strain ATCC 36239 / CBS 767 / BCRC 21394 / JCM 1990 / NBRC 0083 / IGC 2968) (Yeast)).